The sequence spans 142 residues: Large ribosomal subunit protein uL11 (142 aa).

It belongs to the universal ribosomal protein uL11 family. As to quaternary structure, part of the ribosomal stalk of the 50S ribosomal subunit. Interacts with L10 and the large rRNA to form the base of the stalk. L10 forms an elongated spine to which L12 dimers bind in a sequential fashion forming a multimeric L10(L12)X complex. Post-translationally, one or more lysine residues are methylated.

Functionally, forms part of the ribosomal stalk which helps the ribosome interact with GTP-bound translation factors. This is Large ribosomal subunit protein uL11 from Bradyrhizobium diazoefficiens (strain JCM 10833 / BCRC 13528 / IAM 13628 / NBRC 14792 / USDA 110).